A 509-amino-acid polypeptide reads, in one-letter code: Leucine-rich repeat-containing protein 14 (509 aa).

One copy of the LRR 1; degenerate repeat lies at 111–146 (RQRLRLLDMTGMQEEGLEQNPDTMSLWSRTVTLAKA). One copy of the LRR 2; degenerate repeat lies at 210–234 (RLQCRDFRAEELSLRSTAGLLELLN). One copy of the LRR 3; degenerate repeat lies at 235-262 (PGSVRQIDLRFNNLGLSGLNVLLPHMAK). Residues 263–298 (FSHLQSLKLPYSNVDVRRLSPVMEEGLQSFASQLGQ) form an LRR 4; degenerate repeat. LRR repeat units lie at residues 299-323 (LGALKELNLGSSRLSGRLRQLLGGL), 324-355 (QRPLESLELAFCSLLPMDLSYLSQSSHMSSLR), 356-374 (KLDLSGNNLSEFLLTPFLH), 380-407 (SGHLLYLDVMECKLADAHLSALMPILCR), and 408-432 (CSWLRYLGLFCNPISSDGLRMVLQN).

The protein belongs to the PRAME family. LRRC14 subfamily.

Its subcellular location is the cytoplasm. This chain is Leucine-rich repeat-containing protein 14, found in Xenopus laevis (African clawed frog).